The chain runs to 221 residues: 7-carboxy-7-deazaguanine synthase (221 aa).

Substrate is bound by residues Ile-12 to Gly-14 and Arg-27. The Radical SAM core domain occupies Lys-18–Pro-216. [4Fe-4S] cluster contacts are provided by Cys-31, Cys-35, and Cys-38. A Mg(2+)-binding site is contributed by Thr-40. Thr-73 lines the substrate pocket. Gly-75 contacts S-adenosyl-L-methionine.

The protein belongs to the radical SAM superfamily. 7-carboxy-7-deazaguanine synthase family. In terms of assembly, homodimer. Requires [4Fe-4S] cluster as cofactor. It depends on S-adenosyl-L-methionine as a cofactor. Mg(2+) serves as cofactor.

It catalyses the reaction 6-carboxy-5,6,7,8-tetrahydropterin + H(+) = 7-carboxy-7-deazaguanine + NH4(+). Its pathway is purine metabolism; 7-cyano-7-deazaguanine biosynthesis. Its function is as follows. Catalyzes the complex heterocyclic radical-mediated conversion of 6-carboxy-5,6,7,8-tetrahydropterin (CPH4) to 7-carboxy-7-deazaguanine (CDG), a step common to the biosynthetic pathways of all 7-deazapurine-containing compounds. The sequence is that of 7-carboxy-7-deazaguanine synthase from Clostridium acetobutylicum (strain ATCC 824 / DSM 792 / JCM 1419 / IAM 19013 / LMG 5710 / NBRC 13948 / NRRL B-527 / VKM B-1787 / 2291 / W).